We begin with the raw amino-acid sequence, 93 residues long: Large ribosomal subunit protein eL37A (93 aa).

4 residues coordinate Zn(2+): Cys-19, Cys-22, Cys-34, and Cys-37. A C4-type zinc finger spans residues 19 to 37 (CRRCGRSSYHIQKSTCAQC).

The protein belongs to the eukaryotic ribosomal protein eL37 family. Zn(2+) is required as a cofactor.

In terms of biological role, binds to the 23S rRNA. The protein is Large ribosomal subunit protein eL37A of Drosophila melanogaster (Fruit fly).